A 344-amino-acid chain; its full sequence is MSNAITMGIFWHLIGAASAACFYAPFKKVKKWSWETMWSVGGIVSWIILPWAISALLLPDFWAYYSSFSLSTLLPVFLFGAMWGIGNINYGLTMRYLGMSMGIGIAIGITLIVGTLMTPIINGNFDVLINTEGGRMTLLGVLVALIGVGIVTRAGQLKERKMGIKAEEFNLKKGLVLAVMCGIFSAGMSFAMNAAKPMHEAAAALGVDPLYVALPSYVVIMGGGAIINLGFCFIRLAKVKDLSLKADFSLAKPLIIHNVLLSALGGLMWYLQFFFYAWGHARIPAQYDYISWMLHMSFYVLCGGIVGLVLKEWNNTGRRPVTVLSLGCVVIIVAANIVGIGMAN.

10 helical membrane passes run 4–24, 38–58, 68–88, 101–121, 137–157, 175–195, 214–234, 259–279, 290–310, and 323–343; these read AITMGIFWHLIGAASAACFYA, WSVGGIVSWIILPWAISALLL, FSLSTLLPVFLFGAMWGIGNI, MGIGIAIGITLIVGTLMTPII, TLLGVLVALIGVGIVTRAGQL, LVLAVMCGIFSAGMSFAMNAA, LPSYVVIMGGGAIINLGFCFI, VLLSALGGLMWYLQFFFYAWG, ISWMLHMSFYVLCGGIVGLVL, and VLSLGCVVIIVAANIVGIGMA.

This sequence belongs to the L-rhamnose transporter (TC 2.A.7.6) family.

It is found in the cell inner membrane. It carries out the reaction L-rhamnopyranose(in) + H(+)(in) = L-rhamnopyranose(out) + H(+)(out). Uptake of L-rhamnose across the cytoplasmic membrane with the concomitant transport of protons into the cell (symport system). This is L-rhamnose-proton symporter from Shigella flexneri.